The chain runs to 169 residues: Cell division inhibitor SulA (169 aa).

Positions 106 to 112 (ALRTGNY) are ftsZ binding. The lon protease binding stretch occupies residues 162–169 (KIHSNLYH).

The protein belongs to the SulA family. Interacts with FtsZ. In terms of processing, is rapidly cleaved and degraded by the Lon protease once DNA damage is repaired.

In terms of biological role, component of the SOS system and an inhibitor of cell division. Accumulation of SulA causes rapid cessation of cell division and the appearance of long, non-septate filaments. In the presence of GTP, binds a polymerization-competent form of FtsZ in a 1:1 ratio, thus inhibiting FtsZ polymerization and therefore preventing it from participating in the assembly of the Z ring. This mechanism prevents the premature segregation of damaged DNA to daughter cells during cell division. In Citrobacter koseri (strain ATCC BAA-895 / CDC 4225-83 / SGSC4696), this protein is Cell division inhibitor SulA.